A 75-amino-acid chain; its full sequence is UPF0270 protein PSPTO_1630 (75 aa).

It belongs to the UPF0270 family.

This Pseudomonas syringae pv. tomato (strain ATCC BAA-871 / DC3000) protein is UPF0270 protein PSPTO_1630.